Here is a 338-residue protein sequence, read N- to C-terminus: RNA 3'-terminal phosphate cyclase (338 aa).

Residues Gln103 and 283-287 (YLADQ) each bind ATP. The Tele-AMP-histidine intermediate role is filled by His308.

Belongs to the RNA 3'-terminal cyclase family. Type 1 subfamily.

Its subcellular location is the cytoplasm. The enzyme catalyses a 3'-end 3'-phospho-ribonucleotide-RNA + ATP = a 3'-end 2',3'-cyclophospho-ribonucleotide-RNA + AMP + diphosphate. Catalyzes the conversion of 3'-phosphate to a 2',3'-cyclic phosphodiester at the end of RNA. The mechanism of action of the enzyme occurs in 3 steps: (A) adenylation of the enzyme by ATP; (B) transfer of adenylate to an RNA-N3'P to produce RNA-N3'PP5'A; (C) and attack of the adjacent 2'-hydroxyl on the 3'-phosphorus in the diester linkage to produce the cyclic end product. The biological role of this enzyme is unknown but it is likely to function in some aspects of cellular RNA processing. This is RNA 3'-terminal phosphate cyclase from Escherichia coli O127:H6 (strain E2348/69 / EPEC).